The primary structure comprises 295 residues: Aspartate carbamoyltransferase catalytic subunit (295 aa).

Carbamoyl phosphate is bound by residues R54 and T55. K82 contributes to the L-aspartate binding site. R104, H132, and Q135 together coordinate carbamoyl phosphate. L-aspartate is bound by residues R165 and R218. Residues G257 and P258 each coordinate carbamoyl phosphate.

This sequence belongs to the aspartate/ornithine carbamoyltransferase superfamily. ATCase family. In terms of assembly, heterododecamer (2C3:3R2) of six catalytic PyrB chains organized as two trimers (C3), and six regulatory PyrI chains organized as three dimers (R2).

The catalysed reaction is carbamoyl phosphate + L-aspartate = N-carbamoyl-L-aspartate + phosphate + H(+). The protein operates within pyrimidine metabolism; UMP biosynthesis via de novo pathway; (S)-dihydroorotate from bicarbonate: step 2/3. Catalyzes the condensation of carbamoyl phosphate and aspartate to form carbamoyl aspartate and inorganic phosphate, the committed step in the de novo pyrimidine nucleotide biosynthesis pathway. The polypeptide is Aspartate carbamoyltransferase catalytic subunit (Wolbachia pipientis wMel).